Here is a 343-residue protein sequence, read N- to C-terminus: Aspartate carbamoyltransferase catalytic subunit (343 aa).

Carbamoyl phosphate contacts are provided by R91 and T92. L-aspartate is bound at residue K119. Carbamoyl phosphate contacts are provided by R141, H171, and Q174. Positions 204 and 259 each coordinate L-aspartate. Carbamoyl phosphate is bound by residues G300 and P301.

The protein belongs to the aspartate/ornithine carbamoyltransferase superfamily. ATCase family. As to quaternary structure, heterododecamer (2C3:3R2) of six catalytic PyrB chains organized as two trimers (C3), and six regulatory PyrI chains organized as three dimers (R2).

The enzyme catalyses carbamoyl phosphate + L-aspartate = N-carbamoyl-L-aspartate + phosphate + H(+). The protein operates within pyrimidine metabolism; UMP biosynthesis via de novo pathway; (S)-dihydroorotate from bicarbonate: step 2/3. Functionally, catalyzes the condensation of carbamoyl phosphate and aspartate to form carbamoyl aspartate and inorganic phosphate, the committed step in the de novo pyrimidine nucleotide biosynthesis pathway. The protein is Aspartate carbamoyltransferase catalytic subunit of Burkholderia ambifaria (strain MC40-6).